Reading from the N-terminus, the 292-residue chain is Polyketide transferase af380 (292 aa).

The tract at residues 46–267 (DVAVWFQQQG…FDLVAGRGHM (222 aa)) is abhydrolase domain.

This sequence belongs to the polyketide transferase af380 family.

The catalysed reaction is fumagillol + dodecapentaneoyl-[polyketide synthase] = prefumagillin + holo-[polyketide synthase]. Its pathway is secondary metabolite biosynthesis; terpenoid biosynthesis. Its function is as follows. Polyketide transferase; part of the gene cluster that mediates the biosynthesis of fumagillin, a meroterpenoid that has numerous biological activities including irreversible inhibition of human type 2 methionine aminopeptidase (METAP2). Within the pathway, the polyketide transferase af380 catalyzes the transfer of a dodecapentaenoyl group synthesized by the polyketide synthase af370 onto 5R-hydroxy-seco-sesquiterpene to produce prefumagillin. The pathway begins with the conversion of farnesyl pyrophosphate (FPP) to beta-trans-bergamotene by the membrane-bound beta-trans-bergamotene synthase af520. The multifunctional cytochrome P450 monooxygenase af510 then converts beta-trans-bergamotene into 5-keto-demethoxyfumagillol via several oxydation steps. 5-keto-demethoxyfumagillol is then subjected to successive C-6 hydroxylation and O-methylation by the dioxygenase af480 and O-methyltransferase af390-400, respectively, to yield 5-keto-fumagillol, which is then stereoselectively reduced by the keto-reductase af490 to 5R-hydroxy-seco-sesquiterpene. The next step is the polyketide transferase af380-catalyzed transfer of a dodecapentaenoyl group synthesized by the polyketide synthase af370 onto 5R-hydroxy-seco-sesquiterpene which leads to the production of prefumagillin. Finally, oxidative cleavage by the monooxygenase af470 converts prefumagillin to fumagillin. This Aspergillus fumigatus (strain ATCC MYA-4609 / CBS 101355 / FGSC A1100 / Af293) (Neosartorya fumigata) protein is Polyketide transferase af380.